The primary structure comprises 123 residues: Small ribosomal subunit protein uS12 (123 aa).

Position 89 is a 3-methylthioaspartic acid (aspartate 89).

Belongs to the universal ribosomal protein uS12 family. In terms of assembly, part of the 30S ribosomal subunit. Contacts proteins S8 and S17. May interact with IF1 in the 30S initiation complex.

Its function is as follows. With S4 and S5 plays an important role in translational accuracy. Functionally, interacts with and stabilizes bases of the 16S rRNA that are involved in tRNA selection in the A site and with the mRNA backbone. Located at the interface of the 30S and 50S subunits, it traverses the body of the 30S subunit contacting proteins on the other side and probably holding the rRNA structure together. The combined cluster of proteins S8, S12 and S17 appears to hold together the shoulder and platform of the 30S subunit. The sequence is that of Small ribosomal subunit protein uS12 from Afipia carboxidovorans (strain ATCC 49405 / DSM 1227 / KCTC 32145 / OM5) (Oligotropha carboxidovorans).